We begin with the raw amino-acid sequence, 579 residues long: Mycobactin import ATP-binding/permease protein IrtB (579 aa).

At 1–25 the chain is on the cytoplasmic side; that stretch reads MIRTLLRLVPAEKRGAVAGYAVLTL. The 279-residue stretch at 21-299 folds into the ABC transmembrane type-1 domain; it reads AVLTLLSVLL…IADLAPALET (279 aa). A helical membrane pass occupies residues 26–46; sequence LSVLLRAVGAVLLIPLLAALF. At 47–48 the chain is on the periplasmic side; it reads SD. Residues 49–69 form a helical membrane-spanning segment; that stretch reads TPSDAWLWLGWLTAVTLAGWV. The Cytoplasmic segment spans residues 70-126; it reads TDTNTARLGFDLGFAVLSRTQHDMADRLPNVAMSWFTPDNTATARQAIAATGPELAG. 2 consecutive transmembrane segments (helical) span residues 127–147 and 148–168; these read LVVN…AIGV and ALLF…AVLF. Residues 169–241 lie on the Cytoplasmic side of the membrane; the sequence is GALALSGRLS…RLLTMQIPGQ (73 aa). A helical transmembrane segment spans residues 242 to 262; the sequence is VLFSLAGQVALIGFAGMAVWL. Residues 263–272 lie on the Periplasmic side of the membrane; it reads TVRGQLGVPE. A helical transmembrane segment spans residues 273–293; that stretch reads AIALIVVLVRYLEPFAAIADL. Residues 294–579 are Cytoplasmic-facing; it reads APALETTRAT…SEWAIGSTAR (286 aa). Residues 332 to 565 enclose the ABC transporter domain; it reads IEFDDVRFSY…GGRFAQFWAQ (234 aa). 364–371 contacts ATP; that stretch reads GPSGSGKT.

Belongs to the ABC transporter superfamily. Siderophore-Fe(3+) uptake transporter (SIUT) (TC 3.A.1.21) family. As to quaternary structure, forms a heterodimer with IrtA.

Its subcellular location is the cell inner membrane. The ATPase activity of IrtAB is stimulated more than 38-fold in the presence of Fe-MBT, and more than 10-fold in the presence of Fe-cMBT. Functionally, part of the ABC transporter complex IrtAB involved in the import of iron-bound mycobactin (Fe-MBT) and carboxymycobactin (Fe-cMBT). Has a preference for Fe-MBT over Fe-cMBT. Transmembrane domains (TMD) form a pore in the membrane and the ATP-binding domain (NBD) is responsible for energy generation. The chain is Mycobactin import ATP-binding/permease protein IrtB from Mycolicibacterium thermoresistibile (strain ATCC 19527 / DSM 44167 / CIP 105390 / JCM 6362 / NCTC 10409 / 316) (Mycobacterium thermoresistibile).